We begin with the raw amino-acid sequence, 229 residues long: Cytidylate kinase (229 aa).

Residue 10 to 18 participates in ATP binding; it reads GFSSCGKST.

Belongs to the cytidylate kinase family. Type 1 subfamily.

It localises to the cytoplasm. It carries out the reaction CMP + ATP = CDP + ADP. The catalysed reaction is dCMP + ATP = dCDP + ADP. The sequence is that of Cytidylate kinase from Bacteroides fragilis (strain ATCC 25285 / DSM 2151 / CCUG 4856 / JCM 11019 / LMG 10263 / NCTC 9343 / Onslow / VPI 2553 / EN-2).